The sequence spans 602 residues: Aspartate--tRNA(Asp/Asn) ligase (602 aa).

Glu175 serves as a coordination point for L-aspartate. An aspartate region spans residues 199–202 (QIFK). Arg221 serves as a coordination point for L-aspartate. ATP contacts are provided by residues 221–223 (RDE) and Gln230. An L-aspartate-binding site is contributed by His458. Glu492 is a binding site for ATP. Arg499 contacts L-aspartate. 544–547 (GLDR) provides a ligand contact to ATP.

It belongs to the class-II aminoacyl-tRNA synthetase family. Type 1 subfamily. As to quaternary structure, homodimer.

The protein localises to the cytoplasm. It catalyses the reaction tRNA(Asx) + L-aspartate + ATP = L-aspartyl-tRNA(Asx) + AMP + diphosphate. Functionally, aspartyl-tRNA synthetase with relaxed tRNA specificity since it is able to aspartylate not only its cognate tRNA(Asp) but also tRNA(Asn). Reaction proceeds in two steps: L-aspartate is first activated by ATP to form Asp-AMP and then transferred to the acceptor end of tRNA(Asp/Asn). The sequence is that of Aspartate--tRNA(Asp/Asn) ligase from Cupriavidus metallidurans (strain ATCC 43123 / DSM 2839 / NBRC 102507 / CH34) (Ralstonia metallidurans).